A 286-amino-acid polypeptide reads, in one-letter code: 4-diphosphocytidyl-2-C-methyl-D-erythritol kinase (286 aa).

Residue lysine 11 is part of the active site. 94 to 104 (PMGGGIGGGSS) contacts ATP. Aspartate 136 is an active-site residue.

Belongs to the GHMP kinase family. IspE subfamily.

It carries out the reaction 4-CDP-2-C-methyl-D-erythritol + ATP = 4-CDP-2-C-methyl-D-erythritol 2-phosphate + ADP + H(+). It functions in the pathway isoprenoid biosynthesis; isopentenyl diphosphate biosynthesis via DXP pathway; isopentenyl diphosphate from 1-deoxy-D-xylulose 5-phosphate: step 3/6. Functionally, catalyzes the phosphorylation of the position 2 hydroxy group of 4-diphosphocytidyl-2C-methyl-D-erythritol. This chain is 4-diphosphocytidyl-2-C-methyl-D-erythritol kinase, found in Pseudomonas putida (strain ATCC 47054 / DSM 6125 / CFBP 8728 / NCIMB 11950 / KT2440).